A 229-amino-acid chain; its full sequence is 2-C-methyl-D-erythritol 4-phosphate cytidylyltransferase (229 aa).

This sequence belongs to the IspD/TarI cytidylyltransferase family. IspD subfamily.

It carries out the reaction 2-C-methyl-D-erythritol 4-phosphate + CTP + H(+) = 4-CDP-2-C-methyl-D-erythritol + diphosphate. The protein operates within isoprenoid biosynthesis; isopentenyl diphosphate biosynthesis via DXP pathway; isopentenyl diphosphate from 1-deoxy-D-xylulose 5-phosphate: step 2/6. In terms of biological role, catalyzes the formation of 4-diphosphocytidyl-2-C-methyl-D-erythritol from CTP and 2-C-methyl-D-erythritol 4-phosphate (MEP). The protein is 2-C-methyl-D-erythritol 4-phosphate cytidylyltransferase of Neisseria meningitidis serogroup C / serotype 2a (strain ATCC 700532 / DSM 15464 / FAM18).